The sequence spans 235 residues: Small ribosomal subunit protein uS3 (235 aa).

The KH type-2 domain occupies 39–107 (VRKFLNKELA…PAQINIAEVK (69 aa)). The disordered stretch occupies residues 215 to 235 (AQPEQQPADKPKKAPRGKGRK).

This sequence belongs to the universal ribosomal protein uS3 family. In terms of assembly, part of the 30S ribosomal subunit. Forms a tight complex with proteins S10 and S14.

Its function is as follows. Binds the lower part of the 30S subunit head. Binds mRNA in the 70S ribosome, positioning it for translation. This is Small ribosomal subunit protein uS3 from Pasteurella multocida (strain Pm70).